The chain runs to 195 residues: Calcium channel flower (195 aa).

Helical transmembrane passes span 34–54 (LLGI…VISI), 66–88 (IIQM…VCIE), and 117–137 (IFMC…ATGV).

This sequence belongs to the calcium channel flower family. Homomultimer. Associates with the dally/ magu complex.

The protein localises to the cell membrane. The protein resides in the cytoplasmic vesicle. It localises to the secretory vesicle. Its subcellular location is the synaptic vesicle membrane. It is found in the presynaptic cell membrane. The protein localises to the endosome. Its activity is regulated as follows. Channel activity is inhibited by La(3+), which reduces Ca(2+) influx and thus inhibits it's function in promoting activity-dependent bulk endocytosis (ADBE) in response to high stimuli. Its function is as follows. Transmembrane protein which mediates synaptic endocytosis, fitness-based cell culling, neuronal culling, morphogen gradient scaling, and calcium transport. Regulates synaptic endocytosis and hence couples exo- with endocytosis. Controls two major modes of synaptic vesicle (SV) endocytosis in the synaptic boutons of neuromuscular junctions (NMJs); Ca(2+) channel-independent Clathrin-mediated endocytosis (CME) in response to mild stimulation, and Ca(2+) channel-dependent activity-dependent bulk endocytosis (ADBE) in response to strong stimulation. Functions in ADBE and subsequent SV reformation from bulk endosomes by initiating Ca(2+) channel-dependent phosphatidylinositol 4,5-bisphosphate (PtdIns(4,5)P2) compartmentalization in synaptic boutons. There it acts at the periactive zone to provide the low Ca(2+) levels required to initiate Calcineurin activation and upregulate PtdIns(4,5)P2. Conversely PtdIns(4,5)P2 enhances fwe Ca(2+) channel-activity, establishing a positive feedback loop that induces PtdIns(4,5)P2 microdomain at the periactive zone. These microdomains trigger bulk membrane invagination (i.e. ADBE) by triggering actin polymerization while also promoting localization of fwe to bulk endosomes, thereby removing the ADBE trigger to reduce endocytosis and prevent excess membrane uptake. PtdIns(4,5)P2 then promotes SV reformation from the bulk endosomes, to coordinate ADBE and subsequent SV reformation. Different combinations of the flower isoforms at the cell membrane are also required for the identification and elimination of suboptimal or supernumerary cells during development, regeneration, and adulthood. Required for the recognition and elimination of unfit cells in the developing wing during cell competition. In the developing pupal retina, mediates the elimination of unwanted postmitotic neurons, including supernumerary photoreceptor neurons that form at the periphery of the retina and are contained within incomplete ommatidia units. Also required for efficient elimination and replacement of old neurons by newly generated neurons during regeneration in the adult brain following mechanical injury. Downstream of the flower fitness fingerprints, cells identified as unwanted or unfit are eliminated via apoptosis through the expression of ahuizotl (azot). However, the cells marked for elimination by the flower isoforms only undergo apoptosis if additional thresholds are met; (1) their neighboring fit/healthy cells express different levels of the fwe isoforms, and (2) the levels of the protective signal SPARC expressed by the loser or unwanted cells are unable to inhibit caspase activation. These additional thresholds for flower-mediated apoptosis, allows useful cells to recover from transient and limited stress before they are unnecessarily eliminated. Functions with dally and magu in a mechanism of scaling, which utilises apoptosis to ensure that the dpp morphogen gradient, which mediates organ growth, remains proportional to the size of the growing wing. In this mechanism, fwe represses dally- and Magu-dependent activity in expanding the gradient, and dally/Magu inhibits fwe-dependent apoptosis to keep cell death rate low. When the levels of these different proteins are optimally regulated the gradient correctly scales with organ growth but when this fails, fwe-mediated apoptosis is activated to trim the developing tissue to match the correct size of the gradient. The polypeptide is Calcium channel flower (Drosophila ananassae (Fruit fly)).